We begin with the raw amino-acid sequence, 106 residues long: Cell division protein FtsB (106 aa).

The Cytoplasmic segment spans residues 1-3; sequence MGK. A helical membrane pass occupies residues 4 to 21; it reads LTLLLLALLGWLQYSLWL. Residues 22–106 lie on the Periplasmic side of the membrane; the sequence is GKNGVHDYVR…ASSSQNNLQK (85 aa). Residues 40–62 adopt a coiled-coil conformation; the sequence is QGSNAKLKARNDQLFAEIDDLNG.

Belongs to the FtsB family. Part of a complex composed of FtsB, FtsL and FtsQ.

It localises to the cell inner membrane. Essential cell division protein. May link together the upstream cell division proteins, which are predominantly cytoplasmic, with the downstream cell division proteins, which are predominantly periplasmic. This is Cell division protein FtsB from Serratia proteamaculans (strain 568).